Reading from the N-terminus, the 551-residue chain is Palmdelphin (551 aa).

M1 is subject to N-acetylmethionine. The stretch at 12–106 forms a coiled coil; sequence QAITDKRKIQ…LQISTKEEAI (95 aa). K125 participates in a covalent cross-link: Glycyl lysine isopeptide (Lys-Gly) (interchain with G-Cter in SUMO2). Position 135 is a phosphoserine (S135). A Glycyl lysine isopeptide (Lys-Gly) (interchain with G-Cter in SUMO1); alternate cross-link involves residue K179. K179 participates in a covalent cross-link: Glycyl lysine isopeptide (Lys-Gly) (interchain with G-Cter in SUMO2); alternate. Basic and acidic residues predominate over residues 248–259; it reads ERNSKSPTEYHE. Residues 248-280 are disordered; that stretch reads ERNSKSPTEYHEPVYANPFYRPTTPQRETVTPG. Positions 270–280 are enriched in polar residues; that stretch reads TTPQRETVTPG. T271 carries the phosphothreonine modification. Phosphoserine is present on residues S321, S370, S384, and S385. Disordered stretches follow at residues 342–392 and 449–535; these read TPQK…QEDE and DEEE…EDPS. Residues 484–495 are compositionally biased toward basic and acidic residues; it reads KRSEASPHENTN. Phosphoserine occurs at positions 498, 515, and 520.

The protein belongs to the paralemmin family. As to quaternary structure, interacts with GLUL. In terms of processing, phosphorylated. In terms of tissue distribution, ubiquitous. Most abundant in cardiac and skeletal muscle.

It is found in the cytoplasm. It localises to the cell projection. The protein resides in the dendrite. Its subcellular location is the dendritic spine. The sequence is that of Palmdelphin (PALMD) from Homo sapiens (Human).